The following is a 138-amino-acid chain: Translation initiation factor 5A (138 aa).

K37 bears the Hypusine mark.

It belongs to the eIF-5A family.

It localises to the cytoplasm. Functions by promoting the formation of the first peptide bond. The sequence is that of Translation initiation factor 5A from Pyrococcus furiosus (strain ATCC 43587 / DSM 3638 / JCM 8422 / Vc1).